The chain runs to 603 residues: Coagulation factor XII (603 aa).

The first 18 residues, 1 to 18 (GRLLLGSLLVSLESALSA), serve as a signal peptide directing secretion. A Fibronectin type-II domain is found at 41–89 (VTGEPCYFPFQYNRQLYHHCIHKGRPGPRPWCATTPNFDQDQQWAYCLE). 20 disulfide bridges follow: C46-C72, C60-C87, C97-C109, C103-C118, C120-C129, C134-C162, C160-C169, C177-C188, C182-C197, C199-C208, C216-C294, C237-C276, C265-C289, C345-C472, C383-C399, C391-C461, C422-C425, C488-C557, C520-C536, and C547-C578. The EGF-like 1 domain maps to 93–130 (VKDHCSKHNPCQRGGICVNTLSSPHCLCPDHLTGKHCQ). The 41-residue stretch at 132–172 (EKCFEPQLHRFFHENEIWFRTGPAGVAKCHCKGPDAHCKQM) folds into the Fibronectin type-I domain. Residues 173–209 (HSQECQTNPCLNGGRCLEVEGHHLCDCPMGYTGPFCD) form the EGF-like 2 domain. Residues 216-294 (CYEGRGVSYR…SWEYCDLAQC (79 aa)) form the Kringle domain. Residues N248 and N270 are each glycosylated (N-linked (GlcNAc...) asparagine). The region spanning 359–602 (IVGGLVALPG…YLTWIQKHTA (244 aa)) is the Peptidase S1 domain. The active-site Charge relay system is the H398. N419 carries an N-linked (GlcNAc...) asparagine glycan. The Charge relay system role is filled by D447. S551 functions as the Charge relay system in the catalytic mechanism.

It belongs to the peptidase S1 family. In terms of assembly, interacts with HRG; the interaction, which is enhanced in the presence of zinc ions and inhibited by heparin-binding, inhibits factor XII autoactivation and contact-initiated coagulation. O- and N-glycosylated.

The protein localises to the secreted. It carries out the reaction Selective cleavage of Arg-|-Ile bonds in factor VII to form factor VIIa and factor XI to form factor XIa.. With respect to regulation, activity is promoted in the presence of negatively charged surfaces. Its function is as follows. Factor XII is a serum glycoprotein that participates in the initiation of blood coagulation, fibrinolysis, and the generation of bradykinin and angiotensin. Prekallikrein is cleaved by factor XII to form kallikrein, which then cleaves factor XII first to alpha-factor XIIa and then trypsin cleaves it to beta-factor XIIa. Alpha-factor XIIa activates factor XI to factor XIa. The sequence is that of Coagulation factor XII (F12) from Cavia porcellus (Guinea pig).